The primary structure comprises 874 residues: Lon protease (874 aa).

The Lon N-terminal domain maps to 18-261 (LPVLPLDDAV…RLLTWTKEHL (244 aa)). Disordered regions lie at residues 47 to 68 (VDAA…GISS), 120 to 144 (GGVR…SGAG), and 298 to 318 (LSEL…EPAD). Residues 124–142 (PAPAGTDTTGTGTADATSG) show a composition bias toward low complexity. 430 to 437 (GPPGVGKT) serves as a coordination point for ATP. The region spanning 667–851 (TALPGVATGL…REVLDLALEP (185 aa)) is the Lon proteolytic domain. Catalysis depends on residues Ser757 and Lys800. The interval 853–874 (FDADHGGRSPGRAGHSPTALAA) is disordered.

The protein belongs to the peptidase S16 family. In terms of assembly, homohexamer. Organized in a ring with a central cavity.

The protein localises to the cytoplasm. It catalyses the reaction Hydrolysis of proteins in presence of ATP.. In terms of biological role, ATP-dependent serine protease that mediates the selective degradation of mutant and abnormal proteins as well as certain short-lived regulatory proteins. Required for cellular homeostasis and for survival from DNA damage and developmental changes induced by stress. Degrades polypeptides processively to yield small peptide fragments that are 5 to 10 amino acids long. Binds to DNA in a double-stranded, site-specific manner. The chain is Lon protease from Frankia alni (strain DSM 45986 / CECT 9034 / ACN14a).